We begin with the raw amino-acid sequence, 237 residues long: ATP-dependent dethiobiotin synthetase BioD (237 aa).

Aspartate 12 to leucine 17 lines the ATP pocket. Residue threonine 16 participates in Mg(2+) binding. Residue lysine 37 is part of the active site. Residue serine 41 participates in substrate binding. ATP contacts are provided by residues aspartate 54, glutamate 116–glycine 119, and proline 213–leucine 215. Mg(2+) contacts are provided by aspartate 54 and glutamate 116.

This sequence belongs to the dethiobiotin synthetase family. As to quaternary structure, homodimer. The cofactor is Mg(2+).

It is found in the cytoplasm. It carries out the reaction (7R,8S)-7,8-diammoniononanoate + CO2 + ATP = (4R,5S)-dethiobiotin + ADP + phosphate + 3 H(+). It functions in the pathway cofactor biosynthesis; biotin biosynthesis; biotin from 7,8-diaminononanoate: step 1/2. Functionally, catalyzes a mechanistically unusual reaction, the ATP-dependent insertion of CO2 between the N7 and N8 nitrogen atoms of 7,8-diaminopelargonic acid (DAPA, also called 7,8-diammoniononanoate) to form a ureido ring. The protein is ATP-dependent dethiobiotin synthetase BioD of Chromohalobacter salexigens (strain ATCC BAA-138 / DSM 3043 / CIP 106854 / NCIMB 13768 / 1H11).